A 188-amino-acid chain; its full sequence is CASP-like protein 4B3 (188 aa).

A disordered region spans residues 1–21 (MSFSPASSEPHDAPAAAGSSV). Topologically, residues 1 to 42 (MSFSPASSEPHDAPAAAGSSVPASRSIAERWKMEAAPIRARL) are cytoplasmic. The helical transmembrane segment at 43–63 (LLRAFAWLFSLLALVVMATDV) threads the bilayer. Residues 64-76 (HGRGGAQDFSTYP) are Extracellular-facing. A helical transmembrane segment spans residues 77 to 97 (EYNYCLGMSIIALLYATAQLV). The Cytoplasmic segment spans residues 98-114 (RDAHRLSSGRDLVAGRK). Residues 115–135 (AAAVVDFAGDQVVAYSLISGL) traverse the membrane as a helical segment. The Extracellular segment spans residues 136–156 (SAAAPVTDYMRQATDNLFNDS). A glycan (N-linked (GlcNAc...) asparagine) is linked at N154. A helical membrane pass occupies residues 157 to 177 (AAAAISLAFFAFLAISLSALI). Over 178-188 (SGYNLSLEAIV) the chain is Cytoplasmic.

This sequence belongs to the Casparian strip membrane proteins (CASP) family. In terms of assembly, homodimer and heterodimers.

Its subcellular location is the cell membrane. The polypeptide is CASP-like protein 4B3 (Hordeum vulgare subsp. vulgare (Domesticated barley)).